The primary structure comprises 267 residues: MDLIYFIKAFFLGVIEGITEFLPISSTGHLILIGDWINFSSNEEKVFEVVIQLGGILAVCWLFRDKIINLINGVLKSDPVAQRFAVIVMISFLPSAIIGALFIHDIKNVLFNTTVVATALIVGGLIILWVENRKDSEKFKIENIEKIGFKQAIIIGIAQCIAMIPGTSRSGATIVGGMLSGVSRKAATEYSFFLAIPTMLGAAIYDASKNYHLLNTDDILAILIGFSAAFISALIVVNALIRFVAKHSLSVFAWYRIALGLIIFSVN.

8 consecutive transmembrane segments (helical) span residues 4–24, 43–63, 84–104, 109–129, 147–167, 186–206, 219–239, and 243–263; these read IYFI…FLPI, EEKV…CWLF, FAVI…LFIH, VLFN…IILW, IGFK…IPGT, AATE…AIYD, ILAI…VVNA, and FVAK…GLII.

The protein belongs to the UppP family.

It localises to the cell inner membrane. It carries out the reaction di-trans,octa-cis-undecaprenyl diphosphate + H2O = di-trans,octa-cis-undecaprenyl phosphate + phosphate + H(+). In terms of biological role, catalyzes the dephosphorylation of undecaprenyl diphosphate (UPP). Confers resistance to bacitracin. The sequence is that of Undecaprenyl-diphosphatase 2 from Shewanella oneidensis (strain ATCC 700550 / JCM 31522 / CIP 106686 / LMG 19005 / NCIMB 14063 / MR-1).